A 476-amino-acid chain; its full sequence is Inner membrane transporter YcaM (476 aa).

The Cytoplasmic portion of the chain corresponds to 1–9; sequence MAGNVQEKQ. The helical transmembrane segment at 10–30 threads the bilayer; that stretch reads LRWYNIALMSFITVWGFGNVV. Residues 31 to 38 are Periplasmic-facing; sequence NNYANQGL. The chain crosses the membrane as a helical span at residues 39–59; it reads VVVFSWVFIFALYFTPYALIV. The Cytoplasmic segment spans residues 60 to 80; it reads GQLGSTFKDGKGGVSTWIKHT. The chain crosses the membrane as a helical span at residues 81–101; the sequence is MGPGLAYLAAWTYWVVHIPYL. At 102–125 the chain is on the periplasmic side; that stretch reads AQKPQAILIALGWAMKGDGSLIKE. The chain crosses the membrane as a helical span at residues 126–146; that stretch reads YSVVALQGLTLVLFIFFMWVA. The Cytoplasmic portion of the chain corresponds to 147-154; sequence SRGMKSLK. A helical membrane pass occupies residues 155-175; the sequence is IVGSVAGIAMFVMSLLYVAMA. Residues 176-195 are Periplasmic-facing; the sequence is VTAPAITEVHIATTNITWET. The helical transmembrane segment at 196–216 threads the bilayer; sequence FIPHIDFTYITTISMLVFAVG. Over 217 to 240 the chain is Cytoplasmic; the sequence is GAEKISPYVNQTRNPGKEFPKGML. Residues 241 to 261 traverse the membrane as a helical segment; that stretch reads CLAVMVAVCAILGSLAMGMMF. Topologically, residues 262 to 291 are periplasmic; the sequence is DSRNIPDDLMTNGQYYAFQKLGEYYNMGNT. The helical transmembrane segment at 292 to 312 threads the bilayer; that stretch reads LMVIYAIANTLGQVAALVFSI. The Cytoplasmic segment spans residues 313–343; sequence DAPLKVLLGDADSKYIPASLCRTNASGTPVN. The chain crosses the membrane as a helical span at residues 344–364; it reads GYFLTLVLVAILIMLPTLGIG. Over 365-375 the chain is Periplasmic; the sequence is DMNNLYKWLLN. Residues 376 to 396 form a helical membrane-spanning segment; that stretch reads LNSVVMPLRYLWVFVAFIAVV. The Cytoplasmic portion of the chain corresponds to 397–414; the sequence is RLAQKYKPEYVFIRNKPL. The helical transmembrane segment at 415-435 threads the bilayer; the sequence is AMTVGIWCFAFTAFACLTGIF. At 436–448 the chain is on the periplasmic side; that stretch reads PKMEAFTAEWTFQ. The helical transmembrane segment at 449–469 threads the bilayer; that stretch reads LALNVATPFVLVGLGLIFPLL. Over 470–476 the chain is Cytoplasmic; that stretch reads ARKANSK.

It belongs to the amino acid-polyamine-organocation (APC) superfamily.

The protein resides in the cell inner membrane. The polypeptide is Inner membrane transporter YcaM (ycaM) (Escherichia coli (strain K12)).